A 593-amino-acid polypeptide reads, in one-letter code: UvrABC system protein C (593 aa).

A GIY-YIG domain is found at 17 to 94 (MEPGCYLMKD…IKQYQPRYNI (78 aa)). The 36-residue stretch at 199–234 (KTILKSLEERMLTASESLDFERAKEYRDLIQHIQNL) folds into the UVR domain.

It belongs to the UvrC family. In terms of assembly, interacts with UvrB in an incision complex.

The protein localises to the cytoplasm. The UvrABC repair system catalyzes the recognition and processing of DNA lesions. UvrC both incises the 5' and 3' sides of the lesion. The N-terminal half is responsible for the 3' incision and the C-terminal half is responsible for the 5' incision. This is UvrABC system protein C from Staphylococcus aureus (strain MSSA476).